A 275-amino-acid polypeptide reads, in one-letter code: Exosome complex component Rrp42 (275 aa).

Belongs to the RNase PH family. Rrp42 subfamily. In terms of assembly, component of the archaeal exosome complex. Forms a hexameric ring-like arrangement composed of 3 Rrp41-Rrp42 heterodimers. The hexameric ring associates with a trimer of Rrp4 and/or Csl4 subunits.

The protein localises to the cytoplasm. Non-catalytic component of the exosome, which is a complex involved in RNA degradation. Contributes to the structuring of the Rrp41 active site. In Saccharolobus islandicus (strain M.16.27) (Sulfolobus islandicus), this protein is Exosome complex component Rrp42.